We begin with the raw amino-acid sequence, 168 residues long: ATP synthase subunit b (168 aa).

Residues 10–30 (LYLGDMLFYLVSFLIMAALVW) form a helical membrane-spanning segment. The segment at 61-80 (EAQKLAAKRQEELKGSRQEA) is disordered.

The protein belongs to the ATPase B chain family. F-type ATPases have 2 components, F(1) - the catalytic core - and F(0) - the membrane proton channel. F(1) has five subunits: alpha(3), beta(3), gamma(1), delta(1), epsilon(1). F(0) has three main subunits: a(1), b(2) and c(10-14). The alpha and beta chains form an alternating ring which encloses part of the gamma chain. F(1) is attached to F(0) by a central stalk formed by the gamma and epsilon chains, while a peripheral stalk is formed by the delta and b chains.

The protein localises to the cell membrane. F(1)F(0) ATP synthase produces ATP from ADP in the presence of a proton or sodium gradient. F-type ATPases consist of two structural domains, F(1) containing the extramembraneous catalytic core and F(0) containing the membrane proton channel, linked together by a central stalk and a peripheral stalk. During catalysis, ATP synthesis in the catalytic domain of F(1) is coupled via a rotary mechanism of the central stalk subunits to proton translocation. Its function is as follows. Component of the F(0) channel, it forms part of the peripheral stalk, linking F(1) to F(0). In Limosilactobacillus fermentum (strain NBRC 3956 / LMG 18251) (Lactobacillus fermentum), this protein is ATP synthase subunit b.